The following is a 120-amino-acid chain: Small ribosomal subunit protein eS17 (120 aa).

This sequence belongs to the eukaryotic ribosomal protein eS17 family. As to quaternary structure, component of the small ribosomal subunit.

The protein resides in the cytoplasm. The chain is Small ribosomal subunit protein eS17 (RPS17) from Encephalitozoon cuniculi (strain GB-M1) (Microsporidian parasite).